Reading from the N-terminus, the 100-residue chain is Small ribosomal subunit protein uS14c (100 aa).

This sequence belongs to the universal ribosomal protein uS14 family. In terms of assembly, part of the 30S ribosomal subunit.

The protein resides in the plastid. Its subcellular location is the chloroplast. Its function is as follows. Binds 16S rRNA, required for the assembly of 30S particles. In Pyropia yezoensis (Susabi-nori), this protein is Small ribosomal subunit protein uS14c.